A 301-amino-acid polypeptide reads, in one-letter code: Methionyl-tRNA formyltransferase (301 aa).

Residue 109–112 participates in (6S)-5,6,7,8-tetrahydrofolate binding; it reads SLLP.

This sequence belongs to the Fmt family.

The catalysed reaction is L-methionyl-tRNA(fMet) + (6R)-10-formyltetrahydrofolate = N-formyl-L-methionyl-tRNA(fMet) + (6S)-5,6,7,8-tetrahydrofolate + H(+). Its function is as follows. Attaches a formyl group to the free amino group of methionyl-tRNA(fMet). The formyl group appears to play a dual role in the initiator identity of N-formylmethionyl-tRNA by promoting its recognition by IF2 and preventing the misappropriation of this tRNA by the elongation apparatus. The protein is Methionyl-tRNA formyltransferase of Ruegeria pomeroyi (strain ATCC 700808 / DSM 15171 / DSS-3) (Silicibacter pomeroyi).